Consider the following 329-residue polypeptide: Centromere protein L (329 aa).

Residues serine 40 and serine 54 each carry the phosphoserine modification.

Belongs to the CENP-L/IML3 family. Component of the CENPA-CAD complex, composed of CENPI, CENPK, CENPL, CENPO, CENPP, CENPQ, CENPR and CENPS. The CENPA-CAD complex interacts with the CENPA-NAC complex, at least composed of CENPA, CENPC, CENPH, CENPM, CENPN, CENPT and CENPU.

The protein resides in the nucleus. The protein localises to the chromosome. Its subcellular location is the centromere. Component of the CENPA-CAD (nucleosome distal) complex, a complex recruited to centromeres which is involved in assembly of kinetochore proteins, mitotic progression and chromosome segregation. May be involved in incorporation of newly synthesized CENPA into centromeres via its interaction with the CENPA-NAC complex. The sequence is that of Centromere protein L (Cenpl) from Mus musculus (Mouse).